The sequence spans 334 residues: GTPase Obg (334 aa).

The region spanning 1–159 (MRFVDEVVIK…KEVRLELNLL (159 aa)) is the Obg domain. The region spanning 160 to 331 (ADIALLGLPN…LAKKLNEFLH (172 aa)) is the OBG-type G domain. Residues 166–173 (GLPNAGKS), 191–195 (FTTMY), 212–215 (DIPG), 282–285 (NKID), and 312–314 (SAA) each bind GTP. Positions 173 and 193 each coordinate Mg(2+).

The protein belongs to the TRAFAC class OBG-HflX-like GTPase superfamily. OBG GTPase family. As to quaternary structure, monomer. The cofactor is Mg(2+).

The protein localises to the cytoplasm. Its function is as follows. An essential GTPase which binds GTP, GDP and possibly (p)ppGpp with moderate affinity, with high nucleotide exchange rates and a fairly low GTP hydrolysis rate. Plays a role in control of the cell cycle, stress response, ribosome biogenesis and in those bacteria that undergo differentiation, in morphogenesis control. The polypeptide is GTPase Obg (Francisella philomiragia subsp. philomiragia (strain ATCC 25017 / CCUG 19701 / FSC 153 / O#319-036)).